We begin with the raw amino-acid sequence, 188 residues long: Ribose 1,5-bisphosphate phosphokinase PhnN (188 aa).

9 to 16 serves as a coordination point for ATP; sequence GPSGAGKD.

The protein belongs to the ribose 1,5-bisphosphokinase family.

It carries out the reaction alpha-D-ribose 1,5-bisphosphate + ATP = 5-phospho-alpha-D-ribose 1-diphosphate + ADP. It participates in metabolic intermediate biosynthesis; 5-phospho-alpha-D-ribose 1-diphosphate biosynthesis; 5-phospho-alpha-D-ribose 1-diphosphate from D-ribose 5-phosphate (route II): step 3/3. Functionally, catalyzes the phosphorylation of ribose 1,5-bisphosphate to 5-phospho-D-ribosyl alpha-1-diphosphate (PRPP). In Pectobacterium parmentieri (strain WPP163) (Pectobacterium wasabiae (strain WPP163)), this protein is Ribose 1,5-bisphosphate phosphokinase PhnN.